Consider the following 65-residue polypeptide: Neurotoxin Bot2 (65 aa).

An LCN-type CS-alpha/beta domain is found at 2 to 64 (RDAYIAQPEN…VPIRIEGKCH (63 aa)). Intrachain disulfides connect cysteine 12–cysteine 63, cysteine 16–cysteine 36, cysteine 22–cysteine 46, and cysteine 26–cysteine 48. A Phenylalanine amide modification is found at phenylalanine 65.

It belongs to the long (4 C-C) scorpion toxin superfamily. Sodium channel inhibitor family. Alpha subfamily. As to expression, expressed by the venom gland.

Its subcellular location is the secreted. In terms of biological role, binds to sodium channels (Nav) and inhibits the inactivation of the activated channels, thereby blocking neuronal transmission. The sequence is that of Neurotoxin Bot2 from Buthus occitanus tunetanus (Common European scorpion).